A 319-amino-acid chain; its full sequence is MLIFVKSGENMLESILKNTSEIVSIEELTELLKKEEKIAYIGFEPSGRIHMGHYLQIRKMIDLQKAGFKIVILLADLHAYLNQKGTMDEVRALGEENRKVFEAMGLVADYVYGSEFQLKDEYTIDVYKLALSTTLNRARRSMEVIAREDENPKVASVVYPLMQVNDIKHLNADVAVGGMEQRKIHMLSREILPSMGYKAPVCIHNPVLTGLDGEGKMSSSKGNFIAVDDDEATIKKKMKNAFCPMKEVSGNPVLEIAKYYLKYPATVKRPEKFGGDLVLESYEALENAFVEGLHPMDVKNLVSEQLIEILRPIREKMNK.

Tyrosine 40 contributes to the L-tyrosine binding site. Positions 45-53 match the 'HIGH' region motif; the sequence is PSGRIHMGH. Positions 159, 163, 166, and 181 each coordinate L-tyrosine. A 'KMSKS' region motif is present at residues 216-220; the sequence is KMSSS. Serine 219 is a binding site for ATP.

This sequence belongs to the class-I aminoacyl-tRNA synthetase family. TyrS type 3 subfamily. Homodimer.

The protein resides in the cytoplasm. The catalysed reaction is tRNA(Tyr) + L-tyrosine + ATP = L-tyrosyl-tRNA(Tyr) + AMP + diphosphate + H(+). Its function is as follows. Catalyzes the attachment of tyrosine to tRNA(Tyr) in a two-step reaction: tyrosine is first activated by ATP to form Tyr-AMP and then transferred to the acceptor end of tRNA(Tyr). The sequence is that of Tyrosine--tRNA ligase from Methanococcus maripaludis (strain DSM 14266 / JCM 13030 / NBRC 101832 / S2 / LL).